Here is a 164-residue protein sequence, read N- to C-terminus: ATP synthase subunit b (164 aa).

A helical transmembrane segment spans residues 6–26 (GELIGNFILITGSFILLLVLI).

It belongs to the ATPase B chain family. In terms of assembly, F-type ATPases have 2 components, F(1) - the catalytic core - and F(0) - the membrane proton channel. F(1) has five subunits: alpha(3), beta(3), gamma(1), delta(1), epsilon(1). F(0) has three main subunits: a(1), b(2) and c(10-14). The alpha and beta chains form an alternating ring which encloses part of the gamma chain. F(1) is attached to F(0) by a central stalk formed by the gamma and epsilon chains, while a peripheral stalk is formed by the delta and b chains.

The protein resides in the cell membrane. Its function is as follows. F(1)F(0) ATP synthase produces ATP from ADP in the presence of a proton or sodium gradient. F-type ATPases consist of two structural domains, F(1) containing the extramembraneous catalytic core and F(0) containing the membrane proton channel, linked together by a central stalk and a peripheral stalk. During catalysis, ATP synthesis in the catalytic domain of F(1) is coupled via a rotary mechanism of the central stalk subunits to proton translocation. Functionally, component of the F(0) channel, it forms part of the peripheral stalk, linking F(1) to F(0). This is ATP synthase subunit b from Streptococcus pneumoniae serotype 2 (strain D39 / NCTC 7466).